Here is a 201-residue protein sequence, read N- to C-terminus: NADH-quinone oxidoreductase subunit C (201 aa).

It belongs to the complex I 30 kDa subunit family. In terms of assembly, NDH-1 is composed of 14 different subunits. Subunits NuoB, C, D, E, F, and G constitute the peripheral sector of the complex.

The protein localises to the cell inner membrane. It catalyses the reaction a quinone + NADH + 5 H(+)(in) = a quinol + NAD(+) + 4 H(+)(out). NDH-1 shuttles electrons from NADH, via FMN and iron-sulfur (Fe-S) centers, to quinones in the respiratory chain. The immediate electron acceptor for the enzyme in this species is believed to be ubiquinone. Couples the redox reaction to proton translocation (for every two electrons transferred, four hydrogen ions are translocated across the cytoplasmic membrane), and thus conserves the redox energy in a proton gradient. This chain is NADH-quinone oxidoreductase subunit C, found in Azoarcus sp. (strain BH72).